The primary structure comprises 316 residues: Malate dehydrogenase (316 aa).

Residues 12–17 (GAGNIG) and Asp36 each bind NAD(+). Substrate is bound by residues Arg85 and Arg91. NAD(+)-binding positions include Asn98 and 121 to 123 (VTN). Residues Asn123 and Arg154 each contribute to the substrate site. His178 (proton acceptor) is an active-site residue.

It belongs to the LDH/MDH superfamily. MDH type 3 family.

The catalysed reaction is (S)-malate + NAD(+) = oxaloacetate + NADH + H(+). In terms of biological role, catalyzes the reversible oxidation of malate to oxaloacetate. In Wolbachia pipientis wMel, this protein is Malate dehydrogenase.